The sequence spans 409 residues: Tyrosine--tRNA ligase (409 aa).

Position 39 (Y39) interacts with L-tyrosine. The short motif at 44–53 (PTAASLHVGS) is the 'HIGH' region element. 2 residues coordinate L-tyrosine: Y176 and Q180. A 'KMSKS' region motif is present at residues 236 to 240 (KMGKT). Residue K239 coordinates ATP. Residues 346–408 (ISLVDALVGL…GKKAHGVIQA (63 aa)) enclose the S4 RNA-binding domain.

It belongs to the class-I aminoacyl-tRNA synthetase family. TyrS type 1 subfamily. Homodimer.

The protein localises to the cytoplasm. The catalysed reaction is tRNA(Tyr) + L-tyrosine + ATP = L-tyrosyl-tRNA(Tyr) + AMP + diphosphate + H(+). In terms of biological role, catalyzes the attachment of tyrosine to tRNA(Tyr) in a two-step reaction: tyrosine is first activated by ATP to form Tyr-AMP and then transferred to the acceptor end of tRNA(Tyr). In Zymomonas mobilis subsp. mobilis (strain ATCC 31821 / ZM4 / CP4), this protein is Tyrosine--tRNA ligase.